Here is a 284-residue protein sequence, read N- to C-terminus: Tropomyosin (284 aa).

Residues 1-273 (MDAIKKKMLA…KEKYKAISDE (273 aa)) adopt a coiled-coil conformation.

Belongs to the tropomyosin family. As to quaternary structure, homodimer.

Tropomyosin, in association with the troponin complex, plays a central role in the calcium dependent regulation of muscle contraction. The polypeptide is Tropomyosin (Haliotis diversicolor (Abalone)).